A 209-amino-acid chain; its full sequence is Ribosomal RNA large subunit methyltransferase E (209 aa).

Residues Gly63, Trp65, Asp83, Asp99, and Asp124 each coordinate S-adenosyl-L-methionine. Catalysis depends on Lys164, which acts as the Proton acceptor.

Belongs to the class I-like SAM-binding methyltransferase superfamily. RNA methyltransferase RlmE family.

It localises to the cytoplasm. The enzyme catalyses uridine(2552) in 23S rRNA + S-adenosyl-L-methionine = 2'-O-methyluridine(2552) in 23S rRNA + S-adenosyl-L-homocysteine + H(+). Functionally, specifically methylates the uridine in position 2552 of 23S rRNA at the 2'-O position of the ribose in the fully assembled 50S ribosomal subunit. This is Ribosomal RNA large subunit methyltransferase E from Tolumonas auensis (strain DSM 9187 / NBRC 110442 / TA 4).